Consider the following 231-residue polypeptide: Flagellar L-ring protein (231 aa).

The signal sequence occupies residues 1–20; that stretch reads MTYRRIPLYLSCLFLLALSG. Cys21 carries the N-palmitoyl cysteine lipid modification. The S-diacylglycerol cysteine moiety is linked to residue Cys21.

Belongs to the FlgH family. As to quaternary structure, the basal body constitutes a major portion of the flagellar organelle and consists of four rings (L,P,S, and M) mounted on a central rod.

It localises to the cell outer membrane. It is found in the bacterial flagellum basal body. Functionally, assembles around the rod to form the L-ring and probably protects the motor/basal body from shearing forces during rotation. The protein is Flagellar L-ring protein of Desulfotalea psychrophila (strain LSv54 / DSM 12343).